The following is a 449-amino-acid chain: MQAQEVRLLYLFREDGVVTNDLEARVLRKITFRIVPFIMLLYFIAFLDRVNIGFAALTMNQDLGFSSTVFGIGAGIFFVGYFLFEVPSNLILNKVGARIWIARVMITWGIVSGLMAFVQGTTSFYILRFLLGVAEAGFFPGIILYLSFWFPARRRAAVTALFMAAAPLSTVLGSPISGALMEMHGLMGLAGWQWMFLIEAAPALILGVVVLFFLTDRPEKAKWLTEEERNWLVKTMNAEQAGRGTASHSVMAGLADIRVIALALVYFGTSAGLYTLGIWAPQIIKQFGLSAIEVGFINAVPGIFAVVAMVLWARHSDRTGERTWHVVGACLLAAAGLAFAAGATSVFMVLIALTIVNVGISCSKPPLWSMPTMFLSGPAAAAGIATINSIGNLGGFVGPSMIGWIKDTTGSFTGGLYFVAGLLLISAILTLILARSSPKAVETRTANQH.

11 helical membrane-spanning segments follow: residues 34–54 (IVPF…NIGF), 64–84 (GFSS…YFLF), 99–119 (IWIA…AFVQ), 130–150 (LLGV…SFWF), 156–176 (AAVT…GSPI), 194–214 (WMFL…LFFL), 259–279 (VIAL…LGIW), 292–312 (IEVG…MVLW), 336–356 (GLAF…LTIV), 367–387 (LWSM…IATI), and 414–434 (GGLY…LILA).

The protein belongs to the major facilitator superfamily. Phthalate permease family.

The protein resides in the cell membrane. Component of the tartrate utilization system and may allow entry of tartrate and tartrate dehydrogenase. This is Putative tartrate transporter (ttuB) from Agrobacterium vitis (Rhizobium vitis).